The primary structure comprises 353 residues: Bone morphogenetic protein 2 (353 aa).

Residues 1–239 (GSLKRPEDLL…GHPLHKREKR (239 aa)) constitute a propeptide that is removed on maturation. Asparagine 91, asparagine 121, and asparagine 157 each carry an N-linked (GlcNAc...) asparagine glycan. Positions 228–248 (GKGHPLHKREKRQAKHKQRKR) are disordered. Over residues 231–248 (HPLHKREKRQAKHKQRKR) the composition is skewed to basic residues. 3 cysteine pairs are disulfide-bonded: cysteine 253–cysteine 318, cysteine 282–cysteine 350, and cysteine 286–cysteine 352. An N-linked (GlcNAc...) asparagine glycan is attached at asparagine 295.

It belongs to the TGF-beta family. Homodimer; disulfide-linked.

It is found in the secreted. Its function is as follows. Negatively regulates the structure and function of the limb apical ectodermal ridge. This chain is Bone morphogenetic protein 2 (BMP2), found in Gallus gallus (Chicken).